A 391-amino-acid chain; its full sequence is DNA-directed RNA polymerase I subunit RPA43 (391 aa).

Disordered stretches follow at residues 1-27 and 220-391; these read MANW…SGGS and QKQV…KKSK. The segment covering 288-299 has biased composition (basic residues); it reads GRHKEKKKKKKR. A coiled-coil region spans residues 289–353; it reads RHKEKKKKKK…RDKQQDSAEI (65 aa). The segment covering 312-323 has biased composition (polar residues); the sequence is MNNNSLQETALD. Basic residues predominate over residues 336-345; it reads KEKKKKKKRD.

This sequence belongs to the eukaryotic RPA43 RNA polymerase subunit family. Component of the RNA polymerase I (Pol I) complex consisting of at least 13 subunits.

The protein resides in the nucleus. It is found in the nucleolus. Its function is as follows. DNA-dependent RNA polymerase catalyzes the transcription of DNA into RNA using the four ribonucleoside triphosphates as substrates. Component of RNA polymerase I which synthesizes ribosomal RNA precursors. May be involved in recruitment of Pol I to rDNA promoters. The chain is DNA-directed RNA polymerase I subunit RPA43 from Danio rerio (Zebrafish).